Here is a 221-residue protein sequence, read N- to C-terminus: Interleukin-12 subunit alpha (221 aa).

The N-terminal stretch at 1–25 is a signal peptide; it reads MCPLRSLLLISTLVLLHHLPHLSLG. 3 disulfide bridges follow: cysteine 39/cysteine 112, cysteine 66/cysteine 198, and cysteine 87/cysteine 125. The N-linked (GlcNAc...) asparagine glycan is linked to asparagine 95.

Belongs to the IL-6 superfamily. Heterodimer with IL12B; disulfide-linked. This heterodimer is known as interleukin IL-12. Heterodimer with EBI3/IL27B; not disulfide-linked. This heterodimer is known as interleukin IL-35. Interacts with NBR1; this interaction promotes IL-12 secretion.

It localises to the secreted. In terms of biological role, heterodimerizes with IL12B to form the IL-12 cytokine or with EBI3/IL27B to form the IL-35 cytokine. IL-12 is primarily produced by professional antigen-presenting cells (APCs) such as B-cells and dendritic cells (DCs) as well as macrophages and granulocytes and regulates T-cell and natural killer-cell responses, induces the production of interferon-gamma (IFN-gamma), favors the differentiation of T-helper 1 (Th1) cells and is an important link between innate resistance and adaptive immunity. Mechanistically, exerts its biological effects through a receptor composed of IL12R1 and IL12R2 subunits. Binding to the receptor results in the rapid tyrosine phosphorylation of a number of cellular substrates including the JAK family kinases TYK2 and JAK2. In turn, recruited STAT4 gets phosphorylated and translocates to the nucleus where it regulates cytokine/growth factor responsive genes. As part of IL-35, plays essential roles in maintaining the immune homeostasis of the liver microenvironment and also functions as an immune-suppressive cytokine. Mediates biological events through unconventional receptors composed of IL12RB2 and gp130/IL6ST heterodimers or homodimers. Signaling requires the transcription factors STAT1 and STAT4, which form a unique heterodimer that binds to distinct DNA sites. The protein is Interleukin-12 subunit alpha (IL12A) of Capra hircus (Goat).